Consider the following 73-residue polypeptide: MAKEDAIEVEGTVVETLPNAMFRVELPNGHRILAHISGKMRMHFIRILPGDKVTVELSPYDLNRGRITYRSKS.

In terms of domain architecture, S1-like spans 1–72; that stretch reads MAKEDAIEVE…NRGRITYRSK (72 aa).

It belongs to the IF-1 family. In terms of assembly, component of the 30S ribosomal translation pre-initiation complex which assembles on the 30S ribosome in the order IF-2 and IF-3, IF-1 and N-formylmethionyl-tRNA(fMet); mRNA recruitment can occur at any time during PIC assembly.

The protein localises to the cytoplasm. One of the essential components for the initiation of protein synthesis. Stabilizes the binding of IF-2 and IF-3 on the 30S subunit to which N-formylmethionyl-tRNA(fMet) subsequently binds. Helps modulate mRNA selection, yielding the 30S pre-initiation complex (PIC). Upon addition of the 50S ribosomal subunit IF-1, IF-2 and IF-3 are released leaving the mature 70S translation initiation complex. The sequence is that of Translation initiation factor IF-1 from Syntrophobacter fumaroxidans (strain DSM 10017 / MPOB).